A 135-amino-acid chain; its full sequence is uncharacterized protein (135 aa).

This sequence belongs to the MG067/MG068/MG395 family.

This is an uncharacterized protein from Mycoplasma pneumoniae (strain ATCC 29342 / M129 / Subtype 1) (Mycoplasmoides pneumoniae).